The following is a 459-amino-acid chain: Phosphoglucosamine mutase (459 aa).

Ser-105 functions as the Phosphoserine intermediate in the catalytic mechanism. Residues Ser-105, Asp-252, Asp-254, and Asp-256 each coordinate Mg(2+). Ser-105 is modified (phosphoserine).

The protein belongs to the phosphohexose mutase family. Mg(2+) is required as a cofactor. In terms of processing, activated by phosphorylation.

It carries out the reaction alpha-D-glucosamine 1-phosphate = D-glucosamine 6-phosphate. Its function is as follows. Catalyzes the conversion of glucosamine-6-phosphate to glucosamine-1-phosphate. The chain is Phosphoglucosamine mutase from Bifidobacterium adolescentis (strain ATCC 15703 / DSM 20083 / NCTC 11814 / E194a).